The primary structure comprises 403 residues: Cytochrome P450-SU2 (403 aa).

A disordered region spans residues 1–24; sequence MTTAERTAPPDALTVPASRAPGCP. Cysteine 352 contributes to the heme binding site.

The protein belongs to the cytochrome P450 family. Heme serves as cofactor.

Functionally, metabolism of a number of sulfonylurea herbicides. This is Cytochrome P450-SU2 (cyp105B1) from Streptomyces griseolus.